Reading from the N-terminus, the 141-residue chain is Large ribosomal subunit protein bL17 (141 aa).

This sequence belongs to the bacterial ribosomal protein bL17 family. In terms of assembly, part of the 50S ribosomal subunit. Contacts protein L32.

The polypeptide is Large ribosomal subunit protein bL17 (Sinorhizobium medicae (strain WSM419) (Ensifer medicae)).